We begin with the raw amino-acid sequence, 180 residues long: Type-1 fimbrial protein subunit (180 aa).

The signal sequence occupies residues methionine 1–alanine 22. An intrachain disulfide couples cysteine 38 to cysteine 78.

This sequence belongs to the fimbrial protein family.

Its subcellular location is the fimbrium. Functionally, fimbriae (also called pili), polar filaments radiating from the surface of the bacterium to a length of 0.5-1.5 micrometers and numbering 100-300 per cell, enable bacteria to colonize the epithelium of specific host organs. The chain is Type-1 fimbrial protein subunit (fimA) from Serratia marcescens.